The sequence spans 481 residues: MNFNSSKYISHLPESLLPNDASPEWNNKADNAWQLTAATLVGLQTVPGLVILYGSMVKKKWAVNSAFMALYAFAAVLVCWVLWAHHMAFGTKLLPFVGKPNFALSQKFLLSKASTNYYLPMADFVFYQFAFAAITLVLLGGSLLGRMNFYAWMLFVPLWLTLSYTVGAFTIWGNGFLEGKIIDYAGGFVIHLSSGVAGFTAAYWVGPRTSNDRQNFPPNNIIHMLGGAGFLWMGWTGFNGGAPFQVGEITSLAIFNTHLCTATSILVWISLDMAVYKKGSLIGSVQGMMTGLVCITPGAGLVDPWAAILMGALSGSIPWYTMMVLHKKSPFFQSVDDTLGVFHTHAVAGILGGILSGVFAKPKLLRILYGPYGSGLLYSYFDDNIGQGIKQMWYQLLGAVFITIWNVVITSLICILLNRFVNLRMQEEDLEVGDDAAHGEEAYVLWGDGERMRLPLRRDISPIIPYISHQRHSFPINKIDE.

Over 1–36 (MNFNSSKYISHLPESLLPNDASPEWNNKADNAWQLT) the chain is Extracellular. N4 carries N-linked (GlcNAc...) asparagine glycosylation. The helical transmembrane segment at 37–57 (AATLVGLQTVPGLVILYGSMV) threads the bilayer. Residues 58 to 62 (KKKWA) are Cytoplasmic-facing. The helical transmembrane segment at 63 to 83 (VNSAFMALYAFAAVLVCWVLW) threads the bilayer. Residues 84–123 (AHHMAFGTKLLPFVGKPNFALSQKFLLSKASTNYYLPMAD) lie on the Extracellular side of the membrane. The helical transmembrane segment at 124-144 (FVFYQFAFAAITLVLLGGSLL) threads the bilayer. Residues 145–151 (GRMNFYA) lie on the Cytoplasmic side of the membrane. Residues 152-172 (WMLFVPLWLTLSYTVGAFTIW) form a helical membrane-spanning segment. Residues 173–184 (GNGFLEGKIIDY) lie on the Extracellular side of the membrane. A helical transmembrane segment spans residues 185 to 205 (AGGFVIHLSSGVAGFTAAYWV). At 206–220 (GPRTSNDRQNFPPNN) the chain is on the cytoplasmic side. Residues 221–241 (IIHMLGGAGFLWMGWTGFNGG) form a helical membrane-spanning segment. Over 242-248 (APFQVGE) the chain is Extracellular. Residues 249–269 (ITSLAIFNTHLCTATSILVWI) form a helical membrane-spanning segment. The Cytoplasmic segment spans residues 270–281 (SLDMAVYKKGSL). The helical transmembrane segment at 282 to 302 (IGSVQGMMTGLVCITPGAGLV) threads the bilayer. Topologically, residues 303 to 304 (DP) are extracellular. The chain crosses the membrane as a helical span at residues 305–325 (WAAILMGALSGSIPWYTMMVL). The Cytoplasmic portion of the chain corresponds to 326–338 (HKKSPFFQSVDDT). Residues 339–359 (LGVFHTHAVAGILGGILSGVF) form a helical membrane-spanning segment. The Extracellular segment spans residues 360-363 (AKPK). Residues 364-381 (LLRILYGPYGSGLLYSYF) traverse the membrane as a helical segment. The Cytoplasmic portion of the chain corresponds to 382–395 (DDNIGQGIKQMWYQ). Residues 396-416 (LLGAVFITIWNVVITSLICIL) form a helical membrane-spanning segment. Over 417 to 481 (LNRFVNLRMQ…HSFPINKIDE (65 aa)) the chain is Extracellular.

The protein belongs to the ammonia transporter channel (TC 1.A.11.2) family. As to expression, mostly expressed in mycorrhizal roots. Also observed in the cortex and endodermis of non-mycorrhizal roots.

The protein localises to the cell membrane. Involved in ammonium transport. Required for arbuscular mycorrhizal (AM) symbiosis with AM fungi (e.g. Glomus versiforme and G.intraradices) in low nitrogen conditions. This is Ammonium transporter 2 member 3 from Medicago truncatula (Barrel medic).